The chain runs to 22 residues: Putative ORF3b protein (22 aa).

Its function is as follows. Acts as an interferon antagonist when expressed ex vivo. The sequence is that of Putative ORF3b protein from Severe acute respiratory syndrome coronavirus 2 (2019-nCoV).